A 175-amino-acid chain; its full sequence is Protein SELF-PRUNING (175 aa).

This sequence belongs to the phosphatidylethanolamine-binding protein family.

The protein resides in the cytoplasm. Not known. In plants homozygous for the recessive allele of the SP gene, sympodial segments develop progressively fewer nodes until the shoot is terminated by two consecutive. inflorescences. The sequence is that of Protein SELF-PRUNING (SP) from Solanum lycopersicum (Tomato).